Consider the following 294-residue polypeptide: Putative lipid kinase SP_1045 (294 aa).

Positions 1-131 (MKKAMVIINP…IDIGKANDNY (131 aa)) constitute a DAGKc domain. Residues 9–13 (NPTSG), threonine 40, 66–72 (GDGTVNE), and threonine 93 contribute to the ATP site. 2 residues coordinate Mg(2+): aspartate 212 and tyrosine 214. The active-site Proton acceptor is aspartate 269.

This sequence belongs to the diacylglycerol/lipid kinase family. Mg(2+) is required as a cofactor.

Functionally, may catalyze the ATP-dependent phosphorylation of lipids other than diacylglycerol (DAG). In fact, is not able to exhibit diacylglycerol kinase activity in vitro. The chain is Putative lipid kinase SP_1045 from Streptococcus pneumoniae serotype 4 (strain ATCC BAA-334 / TIGR4).